Here is a 296-residue protein sequence, read N- to C-terminus: MMIKQYLQVTKPGIIFGNLISVVGGFLLASKGVIDYPLFLATLFGVSLVVASGCVFNNYIDRDIDRIMERTKNRVLVKGLIDPKVSLIYASILGIAGMLLLYVGANPLAMWLAVIGFVIYVGVYSLYMKRKSVYGTLIGSLSGAAPPVIGYCAVTGQFDMGALILLLIFSLWQMPHSYAIAIFRFKDYQAANIPVLPVIKGISVTKNHITLYILAFMVATLMLTLSGYAGYKYLVVAAAVSVWWLGMALRGYKATNDSVWARKLFVFSIIAITSLSVMMSVDFNVPSSAGLLTYVG.

9 consecutive transmembrane segments (helical) span residues 14-34 (IIFG…KGVI), 36-56 (YPLF…GCVF), 75-95 (VLVK…ILGI), 99-119 (LLLY…GFVI), 133-153 (VYGT…GYCA), 163-183 (LILL…IAIF), 209-229 (ITLY…SGYA), 234-254 (LVVA…GYKA), and 265-285 (FVFS…DFNV).

Belongs to the UbiA prenyltransferase family. Protoheme IX farnesyltransferase subfamily.

It is found in the cell inner membrane. The catalysed reaction is heme b + (2E,6E)-farnesyl diphosphate + H2O = Fe(II)-heme o + diphosphate. It functions in the pathway porphyrin-containing compound metabolism; heme O biosynthesis; heme O from protoheme: step 1/1. Functionally, converts heme B (protoheme IX) to heme O by substitution of the vinyl group on carbon 2 of heme B porphyrin ring with a hydroxyethyl farnesyl side group. This chain is Protoheme IX farnesyltransferase, found in Yersinia enterocolitica serotype O:8 / biotype 1B (strain NCTC 13174 / 8081).